Consider the following 375-residue polypeptide: 23S rRNA (uracil(747)-C(5))-methyltransferase RlmC (375 aa).

[4Fe-4S] cluster-binding residues include C3, C11, C14, and C87. S-adenosyl-L-methionine-binding residues include Q212, F241, E262, and N307. The active-site Nucleophile is C334.

Belongs to the class I-like SAM-binding methyltransferase superfamily. RNA M5U methyltransferase family. RlmC subfamily.

The catalysed reaction is uridine(747) in 23S rRNA + S-adenosyl-L-methionine = 5-methyluridine(747) in 23S rRNA + S-adenosyl-L-homocysteine + H(+). In terms of biological role, catalyzes the formation of 5-methyl-uridine at position 747 (m5U747) in 23S rRNA. In Escherichia coli O127:H6 (strain E2348/69 / EPEC), this protein is 23S rRNA (uracil(747)-C(5))-methyltransferase RlmC.